The following is a 417-amino-acid chain: Metal-binding activator 1 (417 aa).

A DNA-binding region (copper-fist) is located at residues 1–40; the sequence is MIIFNGNKYACASCIRGHRSSTCRHSHRMLIKVRTRGRPS. Positions 11, 14, 23, and 25 each coordinate Zn(2+). 2 disordered regions span residues 128-198 and 216-242; these read FLRK…IFTP and YNSS…AAPH. S143 is modified (phosphoserine). Residues 153–178 are compositionally biased toward basic and acidic residues; it reads SEKKERSRLQQEPIRHFSNCCKKDKS. Polar residues-rich tracts occupy residues 179–190 and 228–238; these read QNPASNGKTNKA and ETLTPQSTTTI. Repeat copies occupy residues 264–279 and 322–337. The interval 264-337 is 2 X 16 AA repeat of C-X-C-X(4)-C-X-C-X-X-C-X-X-H; it reads CSCEDESCPC…NCTCDGCFSH (74 aa).

The protein localises to the nucleus. Its function is as follows. Regulatory protein involved in Cu/Fe utilization and stress resistance. Involved in basal level transcription of FRE1 and H(2)O(2)-induced transcription of CTT1. Regulates the transcription of CTR1 and CTR3 via the copper ion responsive elements in their promoters. Required for degradation of CTR1. The sequence is that of Metal-binding activator 1 (MAC1) from Saccharomyces cerevisiae (strain ATCC 204508 / S288c) (Baker's yeast).